Reading from the N-terminus, the 118-residue chain is Mitochondrial import inner membrane translocase subunit Tim10 B (118 aa).

A Twin CX3C motif motif is present at residues 31–55; the sequence is CFQRCVPSLHHRALDAEEEACLHSC. Intrachain disulfides connect Cys31–Cys55 and Cys35–Cys51. Residues 89 to 118 are disordered; that stretch reads SAVPHATAEQLETSPSRSLPSGNLGKGGAG. Residues 98 to 109 show a composition bias toward polar residues; it reads QLETSPSRSLPS.

It belongs to the small Tim family. In terms of assembly, component of the TIM22 complex, which core is composed of TIMM22, associated with TIMM10 (TIMM10A and/or TIMM10B), TIMM9, AGK and TIMM29.

The protein localises to the mitochondrion inner membrane. Its function is as follows. Component of the TIM22 complex, a complex that mediates the import and insertion of multi-pass transmembrane proteins into the mitochondrial inner membrane. The TIM22 complex forms a twin-pore translocase that uses the membrane potential as the external driving force. In the TIM22 complex, it may act as a docking point for the soluble 70 kDa complex that guides the target proteins in transit through the aqueous mitochondrial intermembrane space. The sequence is that of Mitochondrial import inner membrane translocase subunit Tim10 B (TIMM10B) from Bos taurus (Bovine).